The following is a 415-amino-acid chain: Dynein assembly factor with WD repeat domains 1 (415 aa).

WD repeat units lie at residues 90 to 129 (AHILPLTNVAFNKSGSSFITGSYDRTCKVWDTASGEELHT), 132 to 174 (GHRN…HTFR), 175 to 214 (GHTAEIVCLVFNPQSTLIATGSMDTTAKLWDIQSGEEALT), 217 to 256 (GHAAEIISLSFNTTGDRLITGSFDHTVSVWEIPSGRRIHT), 259 to 298 (GHRGEISSAQFNWDCSLIATASMDKSCKLWDSLNGKCVAT), 301 to 340 (GHDDEVLDVTFDSTGQLVATASADGTARVYSASSRKCLAK), 343 to 384 (GHEG…QVLK), and 386 to 415 (HTDEIFSCAFNYEGNTIITGSKDNTCRIWR).

Belongs to the WD repeat WDR69 family.

It localises to the cytoplasm. It is found in the cytoskeleton. The protein resides in the flagellum basal body. The protein localises to the flagellum axoneme. Its function is as follows. Required for axonemal dynein assembly and ciliary motility in ciliated organs, including Kupffer's vesicle, during embryogenesis. Facilitates the onset of robust cilia motility during development. This chain is Dynein assembly factor with WD repeat domains 1 (daw1), found in Xenopus laevis (African clawed frog).